The primary structure comprises 195 residues: Imidazoleglycerol-phosphate dehydratase (195 aa).

The protein belongs to the imidazoleglycerol-phosphate dehydratase family.

It localises to the cytoplasm. It catalyses the reaction D-erythro-1-(imidazol-4-yl)glycerol 3-phosphate = 3-(imidazol-4-yl)-2-oxopropyl phosphate + H2O. It participates in amino-acid biosynthesis; L-histidine biosynthesis; L-histidine from 5-phospho-alpha-D-ribose 1-diphosphate: step 6/9. The chain is Imidazoleglycerol-phosphate dehydratase from Paraburkholderia xenovorans (strain LB400).